The following is a 352-amino-acid chain: Phosphoribosylformylglycinamidine cyclo-ligase (352 aa).

The protein belongs to the AIR synthase family.

The protein resides in the cytoplasm. It catalyses the reaction 2-formamido-N(1)-(5-O-phospho-beta-D-ribosyl)acetamidine + ATP = 5-amino-1-(5-phospho-beta-D-ribosyl)imidazole + ADP + phosphate + H(+). The protein operates within purine metabolism; IMP biosynthesis via de novo pathway; 5-amino-1-(5-phospho-D-ribosyl)imidazole from N(2)-formyl-N(1)-(5-phospho-D-ribosyl)glycinamide: step 2/2. This Pseudomonas entomophila (strain L48) protein is Phosphoribosylformylglycinamidine cyclo-ligase.